A 397-amino-acid polypeptide reads, in one-letter code: Mycinamicin IV hydroxylase/epoxidase (397 aa).

Residues 63-86 (RGPSMTRDEPRTRPEMVKGGLLSM) form a disordered region. Basic and acidic residues predominate over residues 68-78 (TRDEPRTRPEM). Position 81 (glycine 81) interacts with substrate. The heme site is built by histidine 91, arginine 95, arginine 288, histidine 344, and cysteine 346.

This sequence belongs to the cytochrome P450 family. It depends on heme as a cofactor.

The protein operates within antibiotic biosynthesis; mycinamicin biosynthesis. Functionally, involved in the biosynthesis of mycinamicin, a 16-membered macrolide antibiotic. Catalyzes consecutive hydroxylation (at C14) and epoxidation (at C12-C13) reactions with mycinamicin IV as initial substrate, leading to mycinamicin II. These reactions require prior dimethylation of 6-deoxyallose to mycinose for effective conversion by the dual function MycG enzyme. This Micromonospora griseorubida protein is Mycinamicin IV hydroxylase/epoxidase.